A 276-amino-acid polypeptide reads, in one-letter code: Bifunctional esterase/perhydrolase DCH (276 aa).

An AB hydrolase-1 domain is found at 23-254; sequence PVIFFHHGWP…NGKLISYPGF (232 aa). Catalysis depends on residues S97, D227, and H256.

It belongs to the AB hydrolase superfamily. Bacterial non-heme haloperoxidase / perhydrolase family. Homodimer.

The enzyme catalyses 3,4-dihydrocoumarin + H2O = 3-(2-hydroxyphenyl)propanoate + H(+). It carries out the reaction peracetic acid + H2O = acetate + H2O2 + H(+). The catalysed reaction is a percarboxylic acid + H2O = a carboxylate + H2O2 + H(+). Inhibited by the serine protease inhibitors diisopropyl fluorophosphate and phenylmethanesulfonyl fluoride. Multifunctional enzyme, which shows esterase and perhydrolase activities, and is capable of organic acid-assisted bromination of organic compounds. Catalyzes the hydrolysis of 3,4-dihydrocoumarin. Aromatic lactones other than 3,4-dihydrocoumarin, such as 2-coumaranone and homogentisic acid lactone, are also substrates, but their activities relative to that of 3,4-dihydrocoumarin are quite low. Also catalyzes the hydrolysis of several linear esters, with specificity toward methyl esters. In addition, shows perhydrolase activity and catalyzes the dose- and time-dependent degradation of peracetic acid, a broad-spectrum biocide, to acetic acid and hydrogen peroxide. It suggests that in vivo DCH may play a role in the oxidative stress defense system and detoxify peroxoacids in conjunction with the catalase, i.e. peroxoacids are first hydrolyzed to the corresponding acids and hydrogen peroxide by DCH, and then the resulting hydrogen peroxide is degraded by the catalase. Also shows organic acid-assisted bromination activity toward monochlorodimedon when incubated with hydrogen peroxide and dihydrocoumarin or an organic acid, such as acetate and n-butyrate. The sequence is that of Bifunctional esterase/perhydrolase DCH from Acinetobacter calcoaceticus.